Consider the following 142-residue polypeptide: MEKSMMGFLENTELLTKEGVLSLSPLVLAFIGDAVYSLYIRTKIVAQKNQPVNFLHKETVKYVKAKAQAESVKRIYDLLSEEEKDIVRRGRNMKSNTTPKGVEVQAYRYATGFEALLGYLYLAGEFERLKNILELSVQVIEE.

D33 is a catalytic residue.

This sequence belongs to the MrnC RNase family. In terms of assembly, homodimer. It depends on Mg(2+) as a cofactor.

Its subcellular location is the cytoplasm. Involved in correct processing of both the 5' and 3' ends of 23S rRNA precursor. Processes 30S rRNA precursor transcript even in absence of ribonuclease 3 (Rnc); Rnc processes 30S rRNA into smaller rRNA precursors. In Thermoanaerobacter sp. (strain X514), this protein is Mini-ribonuclease 3.